A 114-amino-acid polypeptide reads, in one-letter code: Iron-sulfur cluster assembly protein CyaY (114 aa).

Belongs to the frataxin family.

Involved in iron-sulfur (Fe-S) cluster assembly. May act as a regulator of Fe-S biogenesis. This chain is Iron-sulfur cluster assembly protein CyaY, found in Ralstonia pickettii (strain 12J).